The following is a 1079-amino-acid chain: Intraflagellar transport protein 80 (1079 aa).

Residues 495–514 (GDMIRPSTVQNQPSTQGLPN) form a disordered region. The span at 501–514 (STVQNQPSTQGLPN) shows a compositional bias: polar residues.

The protein resides in the cell projection. It is found in the cilium. It localises to the flagellum. The protein localises to the cytoplasm. Its subcellular location is the cytoskeleton. The protein resides in the flagellum axoneme. It is found in the flagellum basal body. Functionally, component of the intraflagellar transport complex B (IFT-B) involved in flagellar assembly. This chain is Intraflagellar transport protein 80, found in Giardia intestinalis (strain ATCC 50803 / WB clone C6) (Giardia lamblia).